Here is a 392-residue protein sequence, read N- to C-terminus: DNA replication and repair protein RecF (392 aa).

Residue Gly-30–Thr-37 coordinates ATP.

Belongs to the RecF family.

The protein resides in the cytoplasm. Its function is as follows. The RecF protein is involved in DNA metabolism; it is required for DNA replication and normal SOS inducibility. RecF binds preferentially to single-stranded, linear DNA. It also seems to bind ATP. The sequence is that of DNA replication and repair protein RecF from Corynebacterium aurimucosum (strain ATCC 700975 / DSM 44827 / CIP 107346 / CN-1) (Corynebacterium nigricans).